A 506-amino-acid polypeptide reads, in one-letter code: MLIKVNFMEHYLLNKQFELASAIKSRNKILIHKLVSDVLVSYNSLCYAVYKTLKNSDDKSSSNIQKKKKKKKNFQNLVDSLKCFVLNYDFYKIRCLNLYYLRNFIDCKDQFLHFHFLDIALQNLYSFIFFPFLESNLDKFTYGPRVFRSSIDAVKVLFLLGKQKKYSNYNKYLFCFAFNYTIVKCFDAVFNSWVLSNVSFIDKSILSFWVKNGFDNFYSGDQFFFQKKNFEINRGTSLIFLVIFNFVFMGMQFFLESSILSKFGFFSKFVLITDLNSVVILSSDLKTAKIVKSSLLIFFHSRGICQNFRDNSIVDFFCKNCENKNFVFCGITFHYKLIHGEYKFVLSPILEKIKNVKKKVLNLCKKFSKPLVLFDNIKPLMKSWFNSYKIIKNNYSFLKLSYWIVGKITKSIYLLYVNSNFERGKFGIRKGRRSGRLYKNIAAQVVKRLYFLKDQQRFFINTIEGKIIFKGFSVGLSKKNSIELKNFFSNSLKGKKFFATFGKNFF.

To group II intron maturases.

The protein resides in the plastid. Its subcellular location is the chloroplast. This is an uncharacterized protein from Euglena gracilis.